A 181-amino-acid chain; its full sequence is Large ribosomal subunit protein uL5 (181 aa).

Belongs to the universal ribosomal protein uL5 family. In terms of assembly, part of the 50S ribosomal subunit; contacts the 5S rRNA and probably tRNA. Forms a bridge to the 30S subunit in the 70S ribosome.

Its function is as follows. This is one of the proteins that bind and probably mediate the attachment of the 5S RNA into the large ribosomal subunit, where it forms part of the central protuberance. In the 70S ribosome it contacts protein S13 of the 30S subunit (bridge B1b), connecting the 2 subunits; this bridge is implicated in subunit movement. May contact the P site tRNA; the 5S rRNA and some of its associated proteins might help stabilize positioning of ribosome-bound tRNAs. The protein is Large ribosomal subunit protein uL5 of Methanococcus vannielii.